The sequence spans 281 residues: Energy-coupling factor transporter ATP-binding protein EcfA1 (281 aa).

The ABC transporter domain maps to 7–242 (ISVEDIVFRY…NKELVRIGLD (236 aa)). 42–49 (GHNGSGKS) lines the ATP pocket. Glutamate 168 (proton acceptor) is an active-site residue.

This sequence belongs to the ABC transporter superfamily. Energy-coupling factor EcfA family. In terms of assembly, forms a stable energy-coupling factor (ECF) transporter complex composed of 2 membrane-embedded substrate-binding proteins (S component), 2 ATP-binding proteins (A component) and 2 transmembrane proteins (T component).

It is found in the cell membrane. Its function is as follows. ATP-binding (A) component of a common energy-coupling factor (ECF) ABC-transporter complex. Unlike classic ABC transporters this ECF transporter provides the energy necessary to transport a number of different substrates. The polypeptide is Energy-coupling factor transporter ATP-binding protein EcfA1 (Bacillus subtilis (strain 168)).